Reading from the N-terminus, the 470-residue chain is Ribulose bisphosphate carboxylase large chain (470 aa).

Position 5 is an N6,N6,N6-trimethyllysine (Lys5). Positions 114 and 164 each coordinate substrate. Lys166 acts as the Proton acceptor in catalysis. Lys168 lines the substrate pocket. Mg(2+)-binding residues include Lys192, Asp194, and Glu195. Lys192 is subject to N6-carboxylysine. The active-site Proton acceptor is the His285. Substrate-binding residues include Arg286, His318, and Ser370.

It belongs to the RuBisCO large chain family. Type I subfamily. In terms of assembly, heterohexadecamer of 8 large chains and 8 small chains; disulfide-linked. The disulfide link is formed within the large subunit homodimers. Requires Mg(2+) as cofactor. The disulfide bond which can form in the large chain dimeric partners within the hexadecamer appears to be associated with oxidative stress and protein turnover.

It is found in the plastid. It localises to the chloroplast. The catalysed reaction is 2 (2R)-3-phosphoglycerate + 2 H(+) = D-ribulose 1,5-bisphosphate + CO2 + H2O. The enzyme catalyses D-ribulose 1,5-bisphosphate + O2 = 2-phosphoglycolate + (2R)-3-phosphoglycerate + 2 H(+). In terms of biological role, ruBisCO catalyzes two reactions: the carboxylation of D-ribulose 1,5-bisphosphate, the primary event in carbon dioxide fixation, as well as the oxidative fragmentation of the pentose substrate in the photorespiration process. Both reactions occur simultaneously and in competition at the same active site. This Kigelia africana (Sausage tree) protein is Ribulose bisphosphate carboxylase large chain.